Reading from the N-terminus, the 135-residue chain is Small ribosomal subunit protein uS12 (135 aa).

The tract at residues 1-29 (MPTINQLVRKGREKVEKKSKAPALQGNPQ) is disordered. 3-methylthioaspartic acid is present on D89. The tract at residues 106 to 135 (GVKDRKQSRSKYGAKRPKPGQAAATTGKKK) is disordered. Residues 113–123 (SRSKYGAKRPK) show a composition bias toward basic residues.

The protein belongs to the universal ribosomal protein uS12 family. Part of the 30S ribosomal subunit. Contacts proteins S8 and S17. May interact with IF1 in the 30S initiation complex.

In terms of biological role, with S4 and S5 plays an important role in translational accuracy. Its function is as follows. Interacts with and stabilizes bases of the 16S rRNA that are involved in tRNA selection in the A site and with the mRNA backbone. Located at the interface of the 30S and 50S subunits, it traverses the body of the 30S subunit contacting proteins on the other side and probably holding the rRNA structure together. The combined cluster of proteins S8, S12 and S17 appears to hold together the shoulder and platform of the 30S subunit. This Sulfurihydrogenibium sp. (strain YO3AOP1) protein is Small ribosomal subunit protein uS12.